A 703-amino-acid chain; its full sequence is Collagen alpha-2(VIII) chain (703 aa).

The N-terminal stretch at 1-28 (MLGTLTPLSSLLLLLLVLVLGCGPRASS) is a signal peptide. The segment at 29–76 (GGGAGGAAGYAPVKYIQPMQKGPVGPPFREGKGQYLEMPLPLLPMDLK) is nonhelical region (NC2). The disordered stretch occupies residues 70–544 (LLPMDLKGEP…AFDETGIAGL (475 aa)). Residues 77-536 (GEPGPPGKPG…PGPPGAPGAF (460 aa)) are triple-helical region. Residues 79–97 (PGPPGKPGPRGPPGPPGFP) show a composition bias toward pro residues. A compositionally biased stretch (low complexity) spans 166-192 (PSGITIPGKPGAQGVPGPPGFQGEPGP). Positions 206 to 224 (GDNGVGQPGLPGAPGQGGA) are enriched in gly residues. Composition is skewed to low complexity over residues 265–275 (EPGAVGPKGPP) and 285–297 (AAGL…PSGA). Positions 433-442 (GRPGGPGVAG) are enriched in gly residues. Low complexity-rich tracts occupy residues 444–462 (LGQK…RGPS) and 476–486 (PQGLPGLKGEP). A compositionally biased stretch (pro residues) spans 506-532 (TGPPGVPGSPGITGPPGPPGPPGPPGA). The tract at residues 537–703 (DETGIAGLHL…SFSGFLLCPT (167 aa)) is nonhelical region (NC1). Positions 570–703 (SAHATPAFTA…SFSGFLLCPT (134 aa)) constitute a C1q domain.

As to quaternary structure, homotrimers, or heterotrimers in association with alpha 2(VIII) type collagens. Four homotrimers can form a tetrahedron stabilized by central interacting C-terminal NC1 trimers. Post-translationally, proteolytically cleaved by neutrophil elastase, in vitro. In terms of processing, prolines at the third position of the tripeptide repeating unit (G-X-Y) are hydroxylated in some or all of the chains. In terms of tissue distribution, expressed primarily in the subendothelium of large blood vessels. Also expressed in arterioles and venules in muscle, heart, kidney, spleen, umbilical cord, liver and lung and is also found in connective tissue layers around hair follicles, around nerve bundles in muscle, in the dura of the optic nerve, in cornea and sclera, and in the perichondrium of cartilaginous tissues. In the kidney, expressed in mesangial cells, glomerular endothelial cells, and tubular epithelial cells. Also expressed in mast cells, and in astrocytes during the repair process. Expressed in Descemet's membrane.

It is found in the secreted. The protein resides in the extracellular space. It localises to the extracellular matrix. The protein localises to the basement membrane. Macromolecular component of the subendothelium. Major component of the Descemet's membrane (basement membrane) of corneal endothelial cells. Also a component of the endothelia of blood vessels. Necessary for migration and proliferation of vascular smooth muscle cells and thus, has a potential role in the maintenance of vessel wall integrity and structure, in particular in atherogenesis. In Homo sapiens (Human), this protein is Collagen alpha-2(VIII) chain (COL8A2).